We begin with the raw amino-acid sequence, 236 residues long: Peptidyl-prolyl cis-trans isomerase CYP21-4 (236 aa).

Residues 22–42 form a helical; Signal-anchor for type II membrane protein membrane-spanning segment; it reads ISISTIIVCNLVVAVVILSLV. The tract at residues 52-71 is disordered; that stretch reads SRNTIEHETRSQRFEDTNTA. The segment covering 54 to 67 has biased composition (basic and acidic residues); the sequence is NTIEHETRSQRFED. The 151-residue stretch at 82–232 folds into the PPIase cyclophilin-type domain; that stretch reads FADINTSKGL…SPIGITGVVL (151 aa). N86 is a glycosylation site (N-linked (GlcNAc...) asparagine).

Belongs to the cyclophilin-type PPIase family. Ubiquitous.

It is found in the membrane. The catalysed reaction is [protein]-peptidylproline (omega=180) = [protein]-peptidylproline (omega=0). Functionally, PPIases accelerate the folding of proteins. It catalyzes the cis-trans isomerization of proline imidic peptide bonds in oligopeptides. The sequence is that of Peptidyl-prolyl cis-trans isomerase CYP21-4 (CYP21-4) from Arabidopsis thaliana (Mouse-ear cress).